Reading from the N-terminus, the 104-residue chain is Large ribosomal subunit protein bL21 (104 aa).

Belongs to the bacterial ribosomal protein bL21 family. As to quaternary structure, part of the 50S ribosomal subunit. Contacts protein L20.

Functionally, this protein binds to 23S rRNA in the presence of protein L20. This is Large ribosomal subunit protein bL21 from Thermotoga sp. (strain RQ2).